The following is a 159-amino-acid chain: Peptide deformylase (159 aa).

Residues C88 and H130 each contribute to the Fe cation site. E131 is an active-site residue. Fe cation is bound at residue H134.

The protein belongs to the polypeptide deformylase family. Requires Fe(2+) as cofactor.

The enzyme catalyses N-terminal N-formyl-L-methionyl-[peptide] + H2O = N-terminal L-methionyl-[peptide] + formate. In terms of biological role, removes the formyl group from the N-terminal Met of newly synthesized proteins. Requires at least a dipeptide for an efficient rate of reaction. N-terminal L-methionine is a prerequisite for activity but the enzyme has broad specificity at other positions. This is Peptide deformylase from Caldanaerobacter subterraneus subsp. tengcongensis (strain DSM 15242 / JCM 11007 / NBRC 100824 / MB4) (Thermoanaerobacter tengcongensis).